A 1187-amino-acid polypeptide reads, in one-letter code: uncharacterized protein (1187 aa).

The segment covering 38–57 (KNNQDIPTSNTNISPKPISQ) has biased composition (polar residues). Disordered regions lie at residues 38-127 (KNNQ…NSPT), 189-215 (ISRSSSSSSSSSSSSSGKSNENSIHLN), 248-287 (TQPPQPYPQQIQPPQEQLQQHQSQAPHSPLPQPQPPSQLQ), 358-415 (NNNS…NSNS), 443-490 (FPNN…INNN), 536-689 (QFPF…SSLN), 752-840 (SINN…NKSI), and 1079-1187 (HNNN…NLQK). Low complexity-rich tracts occupy residues 71–84 (KPIVPSTSSTSTLI), 104–124 (PSSSSSSSSSSLSSSSTSIPN), 190–215 (SRSSSSSSSSSSSSSGKSNENSIHLN), and 248–274 (TQPPQPYPQQIQPPQEQLQQHQSQAPH). Over residues 443-455 (FPNNTDENYPSDH) the composition is skewed to polar residues. Composition is skewed to low complexity over residues 458–490 (NDNNNDKNNNTNNNIIINDDNNNNPNNNNINNN), 543–570 (TTESGFSSTSTTPSSTSVPSSLSNSSSA), 585–653 (INNL…SNIN), 662–689 (PNSPISNYSSMSSSSSPNSFTSSTSSLN), 752–790 (SINNNNNNDKNNDIDNSNENLTTTTTTTTTTTTTTTTNN), and 797–809 (NYKINNYNNNIDN). A compositionally biased stretch (acidic residues) spans 815-832 (NDDDNDDDDDDDVDDNDD). 2 stretches are compositionally biased toward low complexity: residues 1079–1149 (HNNN…PSNN) and 1156–1174 (KNNNNNNNNNNNNNNNNTN).

This is an uncharacterized protein from Dictyostelium discoideum (Social amoeba).